An 855-amino-acid polypeptide reads, in one-letter code: Inactive rhomboid protein 1 (855 aa).

The interval 1–35 (MSEARRDSTSSLQRKKPPWLKLDIPSAAPATAEEP) is disordered. Over 1–411 (MSEARRDSTS…HRPFFTYWLT (411 aa)) the chain is Cytoplasmic. Positions 25-35 (PSAAPATAEEP) are enriched in low complexity. Residues Ser76 and Ser176 each carry the phosphoserine modification. Thr180 and Thr183 each carry phosphothreonine. Ser390 bears the Phosphoserine mark. Residues 412–432 (FVHSLVTILAVCIYGIAPVGF) form a helical membrane-spanning segment. The Lumenal segment spans residues 433 to 655 (SQHETVDSVL…NPEVPDQFYR (223 aa)). Asn583 carries N-linked (GlcNAc...) asparagine glycosylation. The helical transmembrane segment at 656-676 (LWLSLFLHAGILHCLVSICFQ) threads the bilayer. Topologically, residues 677-691 (MTVLRDLEKLAGWHR) are cytoplasmic. A helical membrane pass occupies residues 692-712 (IAIIYLLSGVTGNLASAIFLP). Over 713-714 (YR) the chain is Lumenal. The helical transmembrane segment at 715 to 735 (AEVGPAGSQFGILACLFVELF) threads the bilayer. Topologically, residues 736 to 746 (QSWQILARPWR) are cytoplasmic. The chain crosses the membrane as a helical span at residues 747 to 767 (AFFKLLAVVLFLFTFGLLPWI). The Lumenal segment spans residues 768–772 (DNFAH). Residues 773-793 (ISGFISGLFLSFAFLPYISFG) form a helical membrane-spanning segment. Residues 794–803 (KFDLYRKRCQ) are Cytoplasmic-facing. Residues 804–824 (IIVFQVVFLGLLAGLVVLFYV) traverse the membrane as a helical segment. Topologically, residues 825-855 (YPVRCEWCEFLTCIPFTDKFCEKYELDAQLH) are lumenal.

Belongs to the peptidase S54 family. Homodimer, or homooligomer. Interacts with TGFA and HBEGF. Interacts with EGF; may retain EGF in the endoplasmic reticulum and regulates its degradation through the endoplasmic reticulum-associated degradation (ERAD). Interacts (via cytoplasmic N-terminus) with FRMD8/iTAP; this interaction leads to mutual protein stabilization. Interacts with ADAM17/TACE.

The protein resides in the endoplasmic reticulum membrane. The protein localises to the golgi apparatus membrane. Its function is as follows. Regulates ADAM17 protease, a sheddase of the epidermal growth factor (EGF) receptor ligands and TNF, thereby plays a role in sleep, cell survival, proliferation, migration and inflammation. Does not exhibit any protease activity on its own. This Callithrix jacchus (White-tufted-ear marmoset) protein is Inactive rhomboid protein 1 (RHBDF1).